A 427-amino-acid chain; its full sequence is POU domain protein CF1A (427 aa).

Disordered regions lie at residues 39–77, 196–217, 288–309, and 390–427; these read YMQH…GLGS, HHHM…TPTS, TTGS…KKRT, and HDMH…LAAH. A compositionally biased stretch (low complexity) spans 49–66; that stretch reads AAAAAAHHQLPSSPSPNG. A compositionally biased stretch (gly residues) spans 67 to 77; it reads QGNGGGLGLGS. Residues 212–286 enclose the POU-specific domain; the sequence is EDTPTSDDLE…LLQKWLEEAD (75 aa). Residues 304 to 363 constitute a DNA-binding region (homeobox); the sequence is KRKKRTSIEVSVKGALEQHFHKQPKPSAQEITSLADSLQLEKEVVRVWFCNRRQKEKRMT.

Belongs to the POU transcription factor family. Class-3 subfamily. In terms of tissue distribution, coexpressed with acj6 in overlapping subsets of neurons in the embryonic epidermis and central nervous system. First detected in the precursor of the tracheal pits and the stomodeal invagination and later in the peripheral nervous system.

Its subcellular location is the nucleus. Its function is as follows. Binds to a DNA sequence element required for the expression of the dopa decarboxylase gene (Ddc) in specific dopaminergic neurons. Could also play an early role in specific ectodermal cells, and a subsequent role in the embryonic nervous system. The protein is POU domain protein CF1A (vvl) of Drosophila melanogaster (Fruit fly).